The chain runs to 140 residues: Putative nickel-responsive regulator 2 (140 aa).

H81, H92, H94, and C100 together coordinate Ni(2+).

It belongs to the transcriptional regulatory CopG/NikR family. Ni(2+) serves as cofactor.

In terms of biological role, transcriptional regulator. The polypeptide is Putative nickel-responsive regulator 2 (Methanosarcina acetivorans (strain ATCC 35395 / DSM 2834 / JCM 12185 / C2A)).